The chain runs to 283 residues: MKIEGTVVAMVTPFTEDDVVDEAGLRENINYLIENGVDGLLVAGTTGESATITHEEQRRMIDILVDEVNGRVRTVAGAGSNSSREAMGLVEYAEDAGADAALVITPYYNKPQPHGLIEHYTMLEEAADIPLIIYNVPSRTGTDIDVDTVAELAKLDGIIGIKEASPDLDKVSMLRSRLMDLGLDDFTVLSGNDNLTLPMISMGAEGVISVVANVDPARMSRLVNEALSGDFESAMKTHYELYSLMKVLFIESNPVPVKEALNMMGKARGSCEDAPGTPAGCKP.

Threonine 46 lines the pyruvate pocket. Tyrosine 134 acts as the Proton donor/acceptor in catalysis. Catalysis depends on lysine 162, which acts as the Schiff-base intermediate with substrate. Isoleucine 208 contributes to the pyruvate binding site.

This sequence belongs to the DapA family. In terms of assembly, homotetramer; dimer of dimers.

It is found in the cytoplasm. The enzyme catalyses L-aspartate 4-semialdehyde + pyruvate = (2S,4S)-4-hydroxy-2,3,4,5-tetrahydrodipicolinate + H2O + H(+). It participates in amino-acid biosynthesis; L-lysine biosynthesis via DAP pathway; (S)-tetrahydrodipicolinate from L-aspartate: step 3/4. Catalyzes the condensation of (S)-aspartate-beta-semialdehyde [(S)-ASA] and pyruvate to 4-hydroxy-tetrahydrodipicolinate (HTPA). The protein is 4-hydroxy-tetrahydrodipicolinate synthase of Methanothermobacter thermautotrophicus (strain ATCC 29096 / DSM 1053 / JCM 10044 / NBRC 100330 / Delta H) (Methanobacterium thermoautotrophicum).